The following is a 550-amino-acid chain: Putative pentatricopeptide repeat-containing protein At5g37570 (550 aa).

12 PPR repeats span residues 73–107 (GTYLWNHLIKGYSNKFLFFETVSILMRMMRTGLAR), 109–143 (DEYTFPLVMKVCSNNGQVRVGSSVHGLVLRIGFDK), 144–174 (DVVVGTSFVDFYGKCKDLFSARKVFGEMPER), 175–205 (NAVSWTALVVAYVKSGELEEAKSMFDLMPER), 206–240 (NLGSWNALVDGLVKSGDLVNAKKLFDEMPKRDIIS), 241–267 (YTSMIDGYAKGGDMVSARDLFEEARGV), 268–302 (DVRAWSALILGYAQNGQPNEAFKVFSEMCAKNVKP), 303–333 (DEFIMVGLMSACSQMGCFELCEKVDSYLHQR), 339–369 (SHYVVPALIDMNAKCGHMDRAAKLFEEMPQR), 370–404 (DLVSYCSMMEGMAIHGCGSEAIRLFEKMVDEGIVP), 405–435 (DEVAFTVILKVCGQSRLVEEGLRYFELMRKK), and 441–475 (SPDHYSCIVNLLSRTGKLKEAYELIKSMPFEAHAS). A type E motif region spans residues 476–550 (AWGSLLGGCS…KICGRSWISR (75 aa)).

The protein belongs to the PPR family. PCMP-E subfamily.

This is Putative pentatricopeptide repeat-containing protein At5g37570 (PCMP-E37) from Arabidopsis thaliana (Mouse-ear cress).